The chain runs to 359 residues: Guanine nucleotide-binding protein subunit alpha-11 (359 aa).

2 S-palmitoyl cysteine lipidation sites follow: Cys-9 and Cys-10. The G-alpha domain occupies 38–359 (RELKLLLLGT…QLNLKEYNLV (322 aa)). Residues 41–54 (KLLLLGTGESGKST) are G1 motif. Residues 46 to 53 (GTGESGKS) and 180 to 183 (LRVR) each bind GTP. Ser-53 lines the Mg(2+) pocket. A G2 motif region spans residues 178-186 (DVLRVRVPT). A Mg(2+)-binding site is contributed by Thr-186. A G3 motif region spans residues 201 to 210 (FRMVDVGGQR). Residue Gln-209 is modified to Deamidated glutamine; by Photorhabdus PAU_02230. Residues 270–277 (ILFLNKKD) form a G4 motif region. Residues 274 to 277 (NKKD) and Ala-331 contribute to the GTP site. Residues 329–334 (TCATDT) form a G5 motif region.

It belongs to the G-alpha family. G(q) subfamily. In terms of assembly, g proteins are composed of 3 units; alpha, beta and gamma. The alpha chain contains the guanine nucleotide binding site. Interacts with RGS22. Interacts with NTSR1. (Microbial infection) Interacts with human cytomegalovirus (HHV-5) US28. In terms of processing, (Microbial infection) Deamidated at Gln-209 by Photorhabdus asymbiotica toxin PAU_02230, blocking GTP hydrolysis of heterotrimeric GNAQ or GNA11 and G-alphai (GNAI1, GNAI2 or GNAI3) proteins, thereby activating RhoA. Expressed in testis.

Its subcellular location is the cell membrane. It localises to the cytoplasm. It carries out the reaction GTP + H2O = GDP + phosphate + H(+). Guanine nucleotide-binding proteins (G proteins) function as transducers downstream of G protein-coupled receptors (GPCRs) in numerous signaling cascades. The alpha chain contains the guanine nucleotide binding site and alternates between an active, GTP-bound state and an inactive, GDP-bound state. Signaling by an activated GPCR promotes GDP release and GTP binding. The alpha subunit has a low GTPase activity that converts bound GTP to GDP, thereby terminating the signal. Both GDP release and GTP hydrolysis are modulated by numerous regulatory proteins. Signaling is mediated via phospholipase C-beta-dependent inositol lipid hydrolysis for signal propagation: activates phospholipase C-beta: following GPCR activation, GNA11 activates PLC-beta (PLCB1, PLCB2, PLCB3 or PLCB4), leading to production of diacylglycerol (DAG) and inositol 1,4,5-trisphosphate (IP3). Transduces FFAR4 signaling in response to long-chain fatty acids (LCFAs). Together with GNAQ, required for heart development. In the respiratory epithelium, transmits OXGR1-dependent signals that lead to downstream intracellular Ca(2+) release and mucocilliary clearance of airborne pathogens. In Homo sapiens (Human), this protein is Guanine nucleotide-binding protein subunit alpha-11 (GNA11).